The chain runs to 834 residues: Probable receptor-like protein kinase At2g23200 (834 aa).

The N-terminal stretch at 1 to 28 is a signal peptide; sequence MENFCFQDSVSLFITIMVLVLLPRLSLS. Topologically, residues 29–405 are extracellular; that stretch reads DTSTYTRPEN…SSSRVHIITG (377 aa). Asn61, Asn149, Asn221, Asn246, Asn277, Asn289, Asn314, Asn352, Asn361, and Asn394 each carry an N-linked (GlcNAc...) asparagine glycan. Residues 406–426 traverse the membrane as a helical segment; that stretch reads CAVAAAAASALVFSLLFMVFL. Residues 427-834 lie on the Cytoplasmic side of the membrane; that stretch reads KRRRSKKTKP…FSQLKISDAR (408 aa). The region spanning 488–761 is the Protein kinase domain; it reads FDEQLLIGKG…RDVIWDLEYV (274 aa). Residues 494–502 and Lys516 each bind ATP; that span reads IGKGGFGYV. Asp613 serves as the catalytic Proton acceptor.

This sequence belongs to the protein kinase superfamily. Ser/Thr protein kinase family.

The protein localises to the membrane. In Arabidopsis thaliana (Mouse-ear cress), this protein is Probable receptor-like protein kinase At2g23200.